Reading from the N-terminus, the 163-residue chain is Phosphopantetheine adenylyltransferase (163 aa).

Thr11 contacts substrate. ATP contacts are provided by residues Thr11–Phe12 and His19. Positions 43, 75, and 89 each coordinate substrate. ATP contacts are provided by residues Gly90–Arg92, Glu100, and Tyr125–Thr131.

It belongs to the bacterial CoaD family. In terms of assembly, homohexamer. Mg(2+) serves as cofactor.

Its subcellular location is the cytoplasm. It catalyses the reaction (R)-4'-phosphopantetheine + ATP + H(+) = 3'-dephospho-CoA + diphosphate. Its pathway is cofactor biosynthesis; coenzyme A biosynthesis; CoA from (R)-pantothenate: step 4/5. Its function is as follows. Reversibly transfers an adenylyl group from ATP to 4'-phosphopantetheine, yielding dephospho-CoA (dPCoA) and pyrophosphate. The sequence is that of Phosphopantetheine adenylyltransferase from Acinetobacter baumannii (strain ACICU).